A 364-amino-acid polypeptide reads, in one-letter code: Abhydrolase domain-containing protein C57A10.08c (364 aa).

Residues 1 to 8 (MYFFTISR) are Cytoplasmic-facing. The helical; Signal-anchor for type II membrane protein transmembrane segment at 9 to 29 (LTSFISYGILGALGILTFLYL) threads the bilayer. The Lumenal segment spans residues 30–364 (YDAYLAKSFQ…DKFSTTDHNI (335 aa)). The active-site Charge relay system is Ser-183. Asn-326 carries an N-linked (GlcNAc...) asparagine glycan. The active-site Charge relay system is the His-336.

This sequence belongs to the AB hydrolase superfamily.

It localises to the endoplasmic reticulum membrane. In Schizosaccharomyces pombe (strain 972 / ATCC 24843) (Fission yeast), this protein is Abhydrolase domain-containing protein C57A10.08c.